The primary structure comprises 217 residues: Phosphoenolpyruvate guanylyltransferase (217 aa).

The phosphoenolpyruvate site is built by T150, G165, and S168.

The protein belongs to the CofC family.

The catalysed reaction is phosphoenolpyruvate + GTP + H(+) = enolpyruvoyl-2-diphospho-5'-guanosine + diphosphate. It participates in cofactor biosynthesis; coenzyme F420 biosynthesis. Functionally, guanylyltransferase that catalyzes the activation of phosphoenolpyruvate (PEP) as enolpyruvoyl-2-diphospho-5'-guanosine, via the condensation of PEP with GTP. It is involved in the biosynthesis of coenzyme F420, a hydride carrier cofactor. This Mycobacterium marinum (strain ATCC BAA-535 / M) protein is Phosphoenolpyruvate guanylyltransferase.